Reading from the N-terminus, the 414-residue chain is Glutamyl-tRNA reductase (414 aa).

Residues 49–52, Ser-108, 113–115, and Gln-119 each bind substrate; these read TCNR and EPQ. The active-site Nucleophile is the Cys-50. Residue 188-193 participates in NADP(+) binding; the sequence is GAGQTG.

Belongs to the glutamyl-tRNA reductase family. Homodimer.

It catalyses the reaction (S)-4-amino-5-oxopentanoate + tRNA(Glu) + NADP(+) = L-glutamyl-tRNA(Glu) + NADPH + H(+). It functions in the pathway porphyrin-containing compound metabolism; protoporphyrin-IX biosynthesis; 5-aminolevulinate from L-glutamyl-tRNA(Glu): step 1/2. In terms of biological role, catalyzes the NADPH-dependent reduction of glutamyl-tRNA(Glu) to glutamate 1-semialdehyde (GSA). This chain is Glutamyl-tRNA reductase, found in Francisella tularensis subsp. holarctica (strain FTNF002-00 / FTA).